Here is a 475-residue protein sequence, read N- to C-terminus: ATP synthase subunit beta, chloroplastic (475 aa).

An ATP-binding site is contributed by 155-162 (GGAGVGKT).

Belongs to the ATPase alpha/beta chains family. In terms of assembly, F-type ATPases have 2 components, CF(1) - the catalytic core - and CF(0) - the membrane proton channel. CF(1) has five subunits: alpha(3), beta(3), gamma(1), delta(1), epsilon(1). CF(0) has four main subunits: a(1), b(1), b'(1) and c(9-12).

The protein resides in the plastid. It is found in the chloroplast thylakoid membrane. The catalysed reaction is ATP + H2O + 4 H(+)(in) = ADP + phosphate + 5 H(+)(out). In terms of biological role, produces ATP from ADP in the presence of a proton gradient across the membrane. The catalytic sites are hosted primarily by the beta subunits. This is ATP synthase subunit beta, chloroplastic from Pyropia yezoensis (Susabi-nori).